Consider the following 58-residue polypeptide: ATP synthase F(0) complex subunit k, mitochondrial (58 aa).

Lysine 16 and lysine 17 each carry N6-acetyllysine. A helical transmembrane segment spans residues 23-45; it reads TLTGRMNCVLATYGSIALIVLYF.

Component of the ATP synthase complex composed at least of ATP5F1A/subunit alpha, ATP5F1B/subunit beta, ATP5MC1/subunit c (homooctomer), MT-ATP6/subunit a, MT-ATP8/subunit 8, ATP5ME/subunit e, ATP5MF/subunit f, ATP5MG/subunit g, ATP5MK/subunit k, ATP5MJ/subunit j, ATP5F1C/subunit gamma, ATP5F1D/subunit delta, ATP5F1E/subunit epsilon, ATP5PF/subunit F6, ATP5PB/subunit b, ATP5PD/subunit d, ATP5PO/subunit OSCP. ATP synthase complex consists of a soluble F(1) head domain (subunits alpha(3) and beta(3)) - the catalytic core - and a membrane F(0) domain - the membrane proton channel (subunits c, a, 8, e, f, g, k and j). These two domains are linked by a central stalk (subunits gamma, delta, and epsilon) rotating inside the F1 region and a stationary peripheral stalk (subunits F6, b, d, and OSCP). The ATP synthase complex/complex V exists as a monomeric and a dimeric supercomplex that helps shape mitochondrial cristae to optimize proton flow.

Its subcellular location is the mitochondrion membrane. In terms of biological role, subunit k, of the mitochondrial membrane ATP synthase complex (F(1)F(0) ATP synthase or Complex V) that produces ATP from ADP in the presence of a proton gradient across the membrane which is generated by electron transport complexes of the respiratory chain. ATP synthase complex consist of a soluble F(1) head domain - the catalytic core - and a membrane F(1) domain - the membrane proton channel. These two domains are linked by a central stalk rotating inside the F(1) region and a stationary peripheral stalk. During catalysis, ATP synthesis in the catalytic domain of F(1) is coupled via a rotary mechanism of the central stalk subunits to proton translocation. In vivo, can only synthesize ATP although its ATP hydrolase activity can be activated artificially in vitro. Part of the complex F(0) domain. Required for dimerization of the ATP synthase complex and as such regulates ATP synthesis in the mitochondria. In Homo sapiens (Human), this protein is ATP synthase F(0) complex subunit k, mitochondrial.